We begin with the raw amino-acid sequence, 465 residues long: Soluble pyridine nucleotide transhydrogenase (465 aa).

35 to 44 contacts FAD; the sequence is ERYNNVGGGC.

This sequence belongs to the class-I pyridine nucleotide-disulfide oxidoreductase family. It depends on FAD as a cofactor.

It localises to the cytoplasm. The enzyme catalyses NAD(+) + NADPH = NADH + NADP(+). In terms of biological role, conversion of NADPH, generated by peripheral catabolic pathways, to NADH, which can enter the respiratory chain for energy generation. The sequence is that of Soluble pyridine nucleotide transhydrogenase from Photorhabdus laumondii subsp. laumondii (strain DSM 15139 / CIP 105565 / TT01) (Photorhabdus luminescens subsp. laumondii).